A 255-amino-acid chain; its full sequence is Folate receptor alpha (255 aa).

Positions 1–24 (MAHLMTVQLLLLVMWMAECAQSRA) are cleaved as a signal peptide. 8 disulfide bridges follow: C35-C63, C55-C103, C64-C107, C87-C173, C94-C144, C133-C207, C137-C187, and C150-C167. N67 is a glycosylation site (N-linked (GlcNAc...) asparagine). Residues D101, Y105, 122-126 (WRKER), 155-160 (HKGWNW), and S194 each bind folate. An N-linked (GlcNAc...) asparagine glycan is attached at N159. N199 is a glycosylation site (N-linked (GlcNAc...) asparagine). S232 is lipidated: GPI-anchor amidated serine. The propeptide at 233-255 (GAGFHGTWPLLCSLSLVLLWVIS) is removed in mature form.

This sequence belongs to the folate receptor family. The secreted form is derived from the membrane-bound form either by cleavage of the GPI anchor, or/and by proteolysis catalyzed by a metalloprotease. In terms of tissue distribution, detected in kidney proximal tubules (at protein level).

It localises to the cell membrane. The protein localises to the apical cell membrane. It is found in the basolateral cell membrane. Its subcellular location is the secreted. The protein resides in the cytoplasmic vesicle. It localises to the clathrin-coated vesicle. The protein localises to the endosome. In terms of biological role, binds to folate and reduced folic acid derivatives and mediates delivery of 5-methyltetrahydrofolate and folate analogs into the interior of cells. Has high affinity for folate and folic acid analogs at neutral pH. Exposure to slightly acidic pH after receptor endocytosis triggers a conformation change that strongly reduces its affinity for folates and mediates their release. Required for normal embryonic development and normal cell proliferation. Required for renal folate reabsorption. This Mus musculus (Mouse) protein is Folate receptor alpha (Folr1).